The following is a 358-amino-acid chain: DNA replication and repair protein RecF (358 aa).

An ATP-binding site is contributed by 33 to 40 (GENGAGKT).

This sequence belongs to the RecF family.

It localises to the cytoplasm. The RecF protein is involved in DNA metabolism; it is required for DNA replication and normal SOS inducibility. RecF binds preferentially to single-stranded, linear DNA. It also seems to bind ATP. The polypeptide is DNA replication and repair protein RecF (Deinococcus geothermalis (strain DSM 11300 / CIP 105573 / AG-3a)).